We begin with the raw amino-acid sequence, 339 residues long: Fructose-1,6-bisphosphatase isozyme 2 (339 aa).

The segment at Asp-3–Asp-10 is important for interaction with ALDOA. AMP contacts are provided by residues Val-18 and Thr-28–Thr-32. Residues Asp-69 and Glu-98 each contribute to the Mg(2+) site. Position 113 to 114 (Lys-113 to Tyr-114) interacts with AMP. Mg(2+) contacts are provided by Asp-119, Leu-121, and Asp-122. Residue Asp-122 participates in substrate binding. An AMP-binding site is contributed by Arg-141. A Nuclear localization signal motif is present at residues Lys-204–Lys-208. Asn-213–Tyr-216 contacts substrate. 2 positions are modified to phosphotyrosine: Tyr-216 and Tyr-219. Substrate is bound by residues Tyr-245–Met-249, Tyr-265, and Lys-275. Glu-281 lines the Mg(2+) pocket.

The protein belongs to the FBPase class 1 family. As to quaternary structure, homotetramer. Interacts with ALDOA; the interaction blocks inhibition by physiological concentrations of AMP and reduces inhibition by Ca(2+). Interacts with alpha-actinin and F-actin. Requires Mg(2+) as cofactor.

It is found in the cell junction. Its subcellular location is the cytoplasm. It localises to the nucleus. The protein resides in the myofibril. The protein localises to the sarcomere. It is found in the z line. The catalysed reaction is beta-D-fructose 1,6-bisphosphate + H2O = beta-D-fructose 6-phosphate + phosphate. The protein operates within carbohydrate biosynthesis; gluconeogenesis. Its activity is regulated as follows. Subject to complex allosteric regulation. The enzyme can assume an active R-state, or an inactive T-state. Intermediate conformations may exist. AMP acts as an allosteric inhibitor. Fructose 2,6-bisphosphate acts as a competitive inhibitor. Strongly inhibited by Ca(2+). In terms of biological role, catalyzes the hydrolysis of fructose 1,6-bisphosphate to fructose 6-phosphate in the presence of divalent cations and probably participates in glycogen synthesis from carbohydrate precursors, such as lactate. The chain is Fructose-1,6-bisphosphatase isozyme 2 (Fbp2) from Rattus norvegicus (Rat).